The following is a 229-amino-acid chain: Cytidylate kinase (229 aa).

12–20 (GPSGSGKGT) serves as a coordination point for ATP.

This sequence belongs to the cytidylate kinase family. Type 1 subfamily.

It is found in the cytoplasm. It carries out the reaction CMP + ATP = CDP + ADP. The enzyme catalyses dCMP + ATP = dCDP + ADP. The chain is Cytidylate kinase from Pseudomonas syringae pv. syringae (strain B728a).